Reading from the N-terminus, the 147-residue chain is MVVKQQKDASKPAHFFHQVIVIALVLFVSKIIESFMPIPMPASVIGLVLLFVLLCTGAVKLGEVEKVGTTLTNNIGLLFVPAGISVVNSLGVISQAPFLIIGLIIVSTILLLICTGYVTQIIMKVTSRSKGDKVTKKIKIEEAQAHD.

The next 4 membrane-spanning stretches (helical) occupy residues 12 to 32 (PAHF…SKII), 35 to 55 (FMPI…VLLC), 74 to 94 (NIGL…GVIS), and 98 to 118 (FLII…TGYV).

Belongs to the CidA/LrgA family. LrgA subfamily.

The protein localises to the cell membrane. Functionally, inhibits the expression or activity of extracellular murein hydrolases by interacting, possibly with LrgB, with the holin-like proteins CidA and/or CidB. The LrgAB and CidAB proteins may affect the proton motive force of the membrane. May be involved in programmed cell death (PCD), possibly triggering PCD in response to antibiotics and environmental stresses. The chain is Antiholin-like protein LrgA from Staphylococcus aureus (strain USA300).